The sequence spans 286 residues: Phosphoribosylaminoimidazole-succinocarboxamide synthase (286 aa).

This sequence belongs to the SAICAR synthetase family.

It carries out the reaction 5-amino-1-(5-phospho-D-ribosyl)imidazole-4-carboxylate + L-aspartate + ATP = (2S)-2-[5-amino-1-(5-phospho-beta-D-ribosyl)imidazole-4-carboxamido]succinate + ADP + phosphate + 2 H(+). It participates in purine metabolism; IMP biosynthesis via de novo pathway; 5-amino-1-(5-phospho-D-ribosyl)imidazole-4-carboxamide from 5-amino-1-(5-phospho-D-ribosyl)imidazole-4-carboxylate: step 1/2. This is Phosphoribosylaminoimidazole-succinocarboxamide synthase from Actinobacillus succinogenes (strain ATCC 55618 / DSM 22257 / CCUG 43843 / 130Z).